Here is a 545-residue protein sequence, read N- to C-terminus: CTP synthase (545 aa).

Residues M1–L266 are amidoligase domain. Residue S14 participates in CTP binding. A UTP-binding site is contributed by S14. Residues S15–I20 and D72 contribute to the ATP site. The Mg(2+) site is built by D72 and E140. CTP contacts are provided by residues D147–E149, K187–Q192, and K223. UTP contacts are provided by residues K187–Q192 and K223. Position 239-241 (K239–V241) interacts with ATP. The region spanning T291 to R542 is the Glutamine amidotransferase type-1 domain. G352 is a binding site for L-glutamine. The active-site Nucleophile; for glutamine hydrolysis is C379. Residues L380–Q383, E403, and R470 contribute to the L-glutamine site. Catalysis depends on residues H515 and E517.

It belongs to the CTP synthase family. As to quaternary structure, homotetramer.

It carries out the reaction UTP + L-glutamine + ATP + H2O = CTP + L-glutamate + ADP + phosphate + 2 H(+). It catalyses the reaction L-glutamine + H2O = L-glutamate + NH4(+). The enzyme catalyses UTP + NH4(+) + ATP = CTP + ADP + phosphate + 2 H(+). It participates in pyrimidine metabolism; CTP biosynthesis via de novo pathway; CTP from UDP: step 2/2. Its activity is regulated as follows. Allosterically activated by GTP, when glutamine is the substrate; GTP has no effect on the reaction when ammonia is the substrate. The allosteric effector GTP functions by stabilizing the protein conformation that binds the tetrahedral intermediate(s) formed during glutamine hydrolysis. Inhibited by the product CTP, via allosteric rather than competitive inhibition. Its function is as follows. Catalyzes the ATP-dependent amination of UTP to CTP with either L-glutamine or ammonia as the source of nitrogen. Regulates intracellular CTP levels through interactions with the four ribonucleotide triphosphates. The sequence is that of CTP synthase from Citrobacter koseri (strain ATCC BAA-895 / CDC 4225-83 / SGSC4696).